The sequence spans 131 residues: uncharacterized protein (131 aa).

Its subcellular location is the plastid. It is found in the chloroplast. This is an uncharacterized protein from Chlorella vulgaris (Green alga).